The following is a 95-amino-acid chain: Aspartyl/glutamyl-tRNA(Asn/Gln) amidotransferase subunit C (95 aa).

This sequence belongs to the GatC family. As to quaternary structure, heterotrimer of A, B and C subunits.

It carries out the reaction L-glutamyl-tRNA(Gln) + L-glutamine + ATP + H2O = L-glutaminyl-tRNA(Gln) + L-glutamate + ADP + phosphate + H(+). The enzyme catalyses L-aspartyl-tRNA(Asn) + L-glutamine + ATP + H2O = L-asparaginyl-tRNA(Asn) + L-glutamate + ADP + phosphate + 2 H(+). Allows the formation of correctly charged Asn-tRNA(Asn) or Gln-tRNA(Gln) through the transamidation of misacylated Asp-tRNA(Asn) or Glu-tRNA(Gln) in organisms which lack either or both of asparaginyl-tRNA or glutaminyl-tRNA synthetases. The reaction takes place in the presence of glutamine and ATP through an activated phospho-Asp-tRNA(Asn) or phospho-Glu-tRNA(Gln). In Clostridium botulinum (strain 657 / Type Ba4), this protein is Aspartyl/glutamyl-tRNA(Asn/Gln) amidotransferase subunit C.